The chain runs to 304 residues: tRNA pseudouridine synthase B (304 aa).

Aspartate 38 acts as the Nucleophile in catalysis. Residues 227–302 (LPKVEIYKDF…RIFKLKKVFK (76 aa)) form the PUA domain.

The protein belongs to the pseudouridine synthase TruB family. Type 1 subfamily.

It catalyses the reaction uridine(55) in tRNA = pseudouridine(55) in tRNA. In terms of biological role, responsible for synthesis of pseudouridine from uracil-55 in the psi GC loop of transfer RNAs. The polypeptide is tRNA pseudouridine synthase B (Thermosipho melanesiensis (strain DSM 12029 / CIP 104789 / BI429)).